The chain runs to 1249 residues: Calmodulin-regulated spectrin-associated protein 3 (1249 aa).

7 disordered regions span residues 183–205 (KTEQEAAQRASPAAPADGAAPAQ), 328–385 (PDGH…SMSH), 430–457 (VSSDSLGPPRPAPARTPTQPPPEPGDLP), 473–609 (LLPD…RLEE), 632–696 (LGKS…HEGL), 714–1029 (QRDM…SALA), and 1061–1111 (NNLG…TGPR). Threonine 184 is subject to Phosphothreonine. Residues 189-205 (AQRASPAAPADGAAPAQ) show a composition bias toward low complexity. Residue serine 193 is modified to Phosphoserine. One can recognise a Calponin-homology (CH) domain in the interval 203-312 (PAQPSIRYRK…LVVMLAELFM (110 aa)). Serine 334, serine 341, serine 347, serine 351, serine 368, serine 373, and serine 382 each carry phosphoserine. The segment covering 341–352 (SPPQNNSGSSSP) has biased composition (low complexity). Residues 364–383 (GGPQSPLRGSTGSLKSSPSM) show a composition bias toward polar residues. Positions 437-454 (PPRPAPARTPTQPPPEPG) are enriched in pro residues. Phosphoserine occurs at positions 547, 554, and 560. Residues 568–579 (AERKKQLVKAEA) are compositionally biased toward basic and acidic residues. Residues 594 to 604 (EALSSEMSELS) show a composition bias toward low complexity. The stretch at 594-628 (EALSSEMSELSARLEEKRRAIEAQKRRIEAIFAKH) forms a coiled coil. Over residues 647 to 657 (GEAEAEAEEAD) the composition is skewed to acidic residues. Serine 685 carries the post-translational modification Phosphoserine. A coiled-coil region spans residues 696 to 729 (LGEYNRAVSKLSAALSSLQRDMQRLTDQQQRLLA). A compositionally biased stretch (pro residues) spans 731–741 (PEAPGSAPPPA). Positions 754–779 (AASPSPARRVPATRRSPGPGPSQSPR) are enriched in low complexity. Serine 769 is modified (phosphoserine). At threonine 799 the chain carries Phosphothreonine. Position 814 is a phosphoserine (serine 814). The span at 814–825 (SPSQVPVQTRSS) shows a compositional bias: polar residues. Over residues 889 to 940 (YKDEDKPEDEMAQKRASLLERQQRRAEEARRRKQWQEVEKEQRREEAARLAQ) the composition is skewed to basic and acidic residues. The stretch at 896-935 (EDEMAQKRASLLERQQRRAEEARRRKQWQEVEKEQRREEA) forms a coiled coil. The segment covering 950–964 (VSAVPMATPAPAARA) has biased composition (low complexity). A compositionally biased stretch (basic and acidic residues) spans 970-998 (VGPRKGDFTRQEYERRAQLKLMDDLDKVL). Serine 1074 is subject to Phosphoserine. The region spanning 1109–1243 (GPRLYKEPSA…QGKKPTTPKK (135 aa)) is the CKK domain.

Belongs to the CAMSAP1 family. As to quaternary structure, interacts with PLEKHA7. Interacts with CAMSAP2. Interacts with KATNA1 and KATNB1; leading to regulate the length of CAMSAP3-decorated microtubule stretches. Interacts with AKAP9; regulating Golgi assembly in epithelial cells. Interacts with MACF1. Interacts with AKNA.

It localises to the cytoplasm. The protein resides in the cytoskeleton. It is found in the cell junction. Its subcellular location is the adherens junction. The protein localises to the cilium axoneme. It localises to the cilium basal body. Key microtubule-organizing protein that specifically binds the minus-end of non-centrosomal microtubules and regulates their dynamics and organization. Specifically recognizes growing microtubule minus-ends and autonomously decorates and stabilizes microtubule lattice formed by microtubule minus-end polymerization. Acts on free microtubule minus-ends that are not capped by microtubule-nucleating proteins or other factors and protects microtubule minus-ends from depolymerization. In addition, it also reduces the velocity of microtubule polymerization. Required for the biogenesis and the maintenance of zonula adherens by anchoring the minus-end of microtubules to zonula adherens and by recruiting the kinesin KIFC3 to those junctional sites. Required for orienting the apical-to-basal polarity of microtubules in epithelial cells: acts by tethering non-centrosomal microtubules to the apical cortex, leading to their longitudinal orientation. Plays a key role in early embryos, which lack centrosomes: accumulates at the microtubule bridges that connect pairs of cells and enables the formation of a non-centrosomal microtubule-organizing center that directs intracellular transport in the early embryo. Couples non-centrosomal microtubules with actin: interaction with MACF1 at the minus ends of non-centrosomal microtubules, tethers the microtubules to actin filaments, regulating focal adhesion size and cell migration. Plays a key role in the generation of non-centrosomal microtubules by accumulating in the pericentrosomal region and cooperating with KATNA1 to release non-centrosomal microtubules from the centrosome. Through the microtubule cytoskeleton, also regulates the organization of cellular organelles including the Golgi and the early endosomes. Through interaction with AKAP9, involved in translocation of Golgi vesicles in epithelial cells, where microtubules are mainly non-centrosomal. Plays an important role in motile cilia function by facilitatating proper orientation of basal bodies and formation of central microtubule pairs in motile cilia. The chain is Calmodulin-regulated spectrin-associated protein 3 from Homo sapiens (Human).